Consider the following 259-residue polypeptide: Type III pantothenate kinase (259 aa).

6-13 (DVGNTNCT) lines the ATP pocket. 107–110 (GSDR) is a substrate binding site. D109 (proton acceptor) is an active-site residue. D129 is a binding site for K(+). ATP is bound at residue T132. T184 provides a ligand contact to substrate.

The protein belongs to the type III pantothenate kinase family. As to quaternary structure, homodimer. NH4(+) is required as a cofactor. It depends on K(+) as a cofactor.

It is found in the cytoplasm. It carries out the reaction (R)-pantothenate + ATP = (R)-4'-phosphopantothenate + ADP + H(+). Its pathway is cofactor biosynthesis; coenzyme A biosynthesis; CoA from (R)-pantothenate: step 1/5. Its function is as follows. Catalyzes the phosphorylation of pantothenate (Pan), the first step in CoA biosynthesis. This is Type III pantothenate kinase from Listeria monocytogenes serotype 4b (strain CLIP80459).